We begin with the raw amino-acid sequence, 144 residues long: Hemoglobin embryonic subunit alpha (144 aa).

Residues 3–144 (SLSAKDKDVV…LALALAEKYR (142 aa)) form the Globin domain. H61 lines the O2 pocket. H90 contacts heme b.

This sequence belongs to the globin family. Heterotetramer of two alpha chains and two beta chains. Red blood cells.

In terms of biological role, involved in oxygen transport from gills to the various peripheral tissues. The sequence is that of Hemoglobin embryonic subunit alpha from Oryzias latipes (Japanese rice fish).